Reading from the N-terminus, the 355-residue chain is Holliday junction branch migration complex subunit RuvB (355 aa).

The interval 4 to 190 (TDKLAAERII…FGIVARLEFY (187 aa)) is large ATPase domain (RuvB-L). Residues Leu29, Arg30, Gly71, Lys74, Thr75, Thr76, 137–139 (EDY), Arg180, Tyr190, and Arg227 each bind ATP. Thr75 contacts Mg(2+). Residues 191-261 (DADQLARIVR…VADAALAMLD (71 aa)) are small ATPAse domain (RuvB-S). The head domain (RuvB-H) stretch occupies residues 264 to 355 (PVGFDLMDRK…RGMWDTPAGK (92 aa)). 3 residues coordinate DNA: Arg300, Arg319, and Arg324.

It belongs to the RuvB family. Homohexamer. Forms an RuvA(8)-RuvB(12)-Holliday junction (HJ) complex. HJ DNA is sandwiched between 2 RuvA tetramers; dsDNA enters through RuvA and exits via RuvB. An RuvB hexamer assembles on each DNA strand where it exits the tetramer. Each RuvB hexamer is contacted by two RuvA subunits (via domain III) on 2 adjacent RuvB subunits; this complex drives branch migration. In the full resolvosome a probable DNA-RuvA(4)-RuvB(12)-RuvC(2) complex forms which resolves the HJ.

The protein resides in the cytoplasm. It catalyses the reaction ATP + H2O = ADP + phosphate + H(+). Its function is as follows. The RuvA-RuvB-RuvC complex processes Holliday junction (HJ) DNA during genetic recombination and DNA repair, while the RuvA-RuvB complex plays an important role in the rescue of blocked DNA replication forks via replication fork reversal (RFR). RuvA specifically binds to HJ cruciform DNA, conferring on it an open structure. The RuvB hexamer acts as an ATP-dependent pump, pulling dsDNA into and through the RuvAB complex. RuvB forms 2 homohexamers on either side of HJ DNA bound by 1 or 2 RuvA tetramers; 4 subunits per hexamer contact DNA at a time. Coordinated motions by a converter formed by DNA-disengaged RuvB subunits stimulates ATP hydrolysis and nucleotide exchange. Immobilization of the converter enables RuvB to convert the ATP-contained energy into a lever motion, pulling 2 nucleotides of DNA out of the RuvA tetramer per ATP hydrolyzed, thus driving DNA branch migration. The RuvB motors rotate together with the DNA substrate, which together with the progressing nucleotide cycle form the mechanistic basis for DNA recombination by continuous HJ branch migration. Branch migration allows RuvC to scan DNA until it finds its consensus sequence, where it cleaves and resolves cruciform DNA. This Burkholderia ambifaria (strain ATCC BAA-244 / DSM 16087 / CCUG 44356 / LMG 19182 / AMMD) (Burkholderia cepacia (strain AMMD)) protein is Holliday junction branch migration complex subunit RuvB.